Reading from the N-terminus, the 305-residue chain is N-acetylneuraminate lyase A (305 aa).

Residues T51 and T52 each contribute to the aceneuramate site. Residue Y143 is the Proton donor of the active site. K173 serves as the catalytic Schiff-base intermediate with substrate. Aceneuramate-binding residues include S175, G197, D199, E200, and S216.

The protein belongs to the DapA family. NanA subfamily. In terms of assembly, homotetramer.

Its subcellular location is the cytoplasm. It catalyses the reaction aceneuramate = aldehydo-N-acetyl-D-mannosamine + pyruvate. Its pathway is amino-sugar metabolism; N-acetylneuraminate degradation. Functionally, catalyzes the cleavage of N-acetylneuraminic acid (sialic acid) to form pyruvate and N-acetylmannosamine via a Schiff base intermediate. It prevents sialic acids from being recycled and returning to the cell surface. Involved in the N-glycolylneuraminic acid (Neu5Gc) degradation pathway. The sequence is that of N-acetylneuraminate lyase A (npl-a) from Xenopus laevis (African clawed frog).